The chain runs to 138 residues: ATP synthase epsilon chain (138 aa).

This sequence belongs to the ATPase epsilon chain family. As to quaternary structure, F-type ATPases have 2 components, CF(1) - the catalytic core - and CF(0) - the membrane proton channel. CF(1) has five subunits: alpha(3), beta(3), gamma(1), delta(1), epsilon(1). CF(0) has three main subunits: a, b and c.

Its subcellular location is the cell inner membrane. In terms of biological role, produces ATP from ADP in the presence of a proton gradient across the membrane. The sequence is that of ATP synthase epsilon chain from Bartonella henselae (strain ATCC 49882 / DSM 28221 / CCUG 30454 / Houston 1) (Rochalimaea henselae).